The primary structure comprises 98 residues: Carboxysome shell protein CsoS1C (98 aa).

The 86-residue stretch at 8 to 93 (ALGMIETRGL…VHSEVENILP (86 aa)) folds into the BMC domain.

Belongs to the bacterial microcompartments protein family. CsoS1 subfamily. In terms of assembly, homohexamer with a small central pore. Interacts with the N-terminus (residues 1-136) of RuBisCO (CbbL).

The protein resides in the carboxysome. One of shell proteins of the carboxysome, a polyhedral inclusion where RuBisCO (ribulose bisphosphate carboxylase, ccbL-ccbS) is sequestered. Assembles into hexamers which make sheets that form the facets of the polyhedral carboxysome. The shell probably limits the diffusion of CO(2) into and out of the carboxysome. There are estimated to be 2970 CsoS1A/CsoS1C proteins per carboxysome (the proteins differ by only 1 residue). In terms of biological role, unlike beta-carboxysomes, alpha-carboxysomes (Cb) can form without cargo protein. CsoS2 is essential for Cb formation and is also capable of targeting foreign proteins to the Cb. The Cb shell assembles with the aid of CsoS2; CsoS1A, CsoS1B and CsoS1C form the majority of the shell while CsoS4A and CsoS4B form vertices. CsoS1D forms pseudohexamers that probably control metabolite flux into and out of the shell. The protein is Carboxysome shell protein CsoS1C of Halothiobacillus neapolitanus (strain ATCC 23641 / c2) (Thiobacillus neapolitanus).